Consider the following 177-residue polypeptide: Large ribosomal subunit protein uL6 (177 aa).

Belongs to the universal ribosomal protein uL6 family. Part of the 50S ribosomal subunit.

Its function is as follows. This protein binds to the 23S rRNA, and is important in its secondary structure. It is located near the subunit interface in the base of the L7/L12 stalk, and near the tRNA binding site of the peptidyltransferase center. The protein is Large ribosomal subunit protein uL6 of Chromobacterium violaceum (strain ATCC 12472 / DSM 30191 / JCM 1249 / CCUG 213 / NBRC 12614 / NCIMB 9131 / NCTC 9757 / MK).